A 353-amino-acid chain; its full sequence is Nuclear hormone receptor family member nhr-27 (353 aa).

The nuclear receptor DNA-binding region spans 24–102; it reads VSNCVVCGRL…KGMLDLSRYT (79 aa). NR C4-type zinc fingers lie at residues 27 to 47 and 64 to 85; these read CVVCGRLTSLFNYGAHSCSAC and CKYSGNCFENFKRAIHFECKFC. Positions 119 to 351 constitute an NR LBD domain; that stretch reads ETLFLTMTVS…SQVHQDVIEF (233 aa). An AF-2 region spans residues 340 to 351; sequence QPSQVHQDVIEF.

The protein belongs to the nuclear hormone receptor family.

The protein localises to the nucleus. Functionally, ligand-activated transcription factor. Involved in lifespan extension in a manner dependent upon mitochondrial function. This is Nuclear hormone receptor family member nhr-27 from Caenorhabditis elegans.